The following is a 294-amino-acid chain: StAR-related lipid transfer protein 3 (294 aa).

The MENTAL domain maps to 1-66 (DGYICNNGMD…YSPPESLAGS (66 aa)). An FFAT motif is present at residues 55–61 (QFYSPPE). The segment at 58 to 77 (SPPESLAGSEEDLDEEGLGR) is disordered. Residues 79-292 (AVSPQEKALV…LRQRIRDLRS (214 aa)) enclose the START domain.

It belongs to the STARD3 family. In terms of assembly, homodimer. Phosphorylated. Phosphorylation allows the tethering of two membranes that participates in the formation of ER-endosome contacts. Phosphorylation of FFAT motif drives membrane tethering between the endoplasmic reticulum and late endosomes that in turn allows the efficient transport of sterol mediated by the START domain.

The protein resides in the late endosome membrane. The catalysed reaction is cholesterol(in) = cholesterol(out). Its function is as follows. Sterol-binding protein that mediates cholesterol transport from the endoplasmic reticulum to endosomes. The sterol transport mechanism is triggered by phosphorylation of FFAT motif that leads to membrane tethering between the endoplasmic reticulum and late endosomes. Acts as a lipid transfer protein that redirects sterol to the endosome at the expense of the cell membrane and favors membrane formation inside endosomes. This Salvelinus fontinalis (Brook trout) protein is StAR-related lipid transfer protein 3.